The primary structure comprises 439 residues: Uracil-regulated protein 1 (439 aa).

The disordered stretch occupies residues 1-24 (MLATEQSRPAECNGAHAHEKTEEV). 268–272 (RVHDE) contacts GTP. Cysteine 273, cysteine 284, and cysteine 286 together coordinate Zn(2+). 315 to 317 (EGR) contacts GTP. The active-site Proton acceptor is aspartate 353. Catalysis depends on arginine 355, which acts as the Nucleophile. Positions 377 and 382 each coordinate GTP.

It belongs to the GTP cyclohydrolase II family.

It is found in the cytoplasm. The protein localises to the nucleus. The chain is Uracil-regulated protein 1 (urg1) from Schizosaccharomyces pombe (strain 972 / ATCC 24843) (Fission yeast).